The primary structure comprises 206 residues: Transcription factor BTF3 (206 aa).

The interval 1–42 (MRRTGAPAQADSRGRGRARGGCPGGEATLSQPPPRGGTRGQE) is disordered. At Arg-19 the chain carries Omega-N-methylarginine. Position 30 is a phosphoserine (Ser-30). Residues Lys-46 and Lys-54 each carry the N6-methyllysine modification. One can recognise an NAC-A/B domain in the interval 82–147 (TADDKKLQFS…AETKQLTEML (66 aa)). Thr-160 is subject to Phosphothreonine. The tract at residues 170 to 206 (PKQSVDGKAPLATGEDDDDEVPDLVENFDEASKNEAN) is disordered. Ser-173 carries the post-translational modification Phosphoserine. The segment covering 183–198 (GEDDDDEVPDLVENFD) has biased composition (acidic residues).

Belongs to the NAC-beta family. As to quaternary structure, part of the nascent polypeptide-associated complex (NAC), which is a heterodimer of NACA and BTF3 (via NAC-A/B domains). NAC associates with ribosomes through the BTF3/NACB subunit. Both subunits can contact nascent polypeptide chains.

Its subcellular location is the cytoplasm. The protein resides in the nucleus. When associated with NACA, prevents inappropriate targeting of non-secretory polypeptides to the endoplasmic reticulum (ER). Binds to nascent polypeptide chains as they emerge from the ribosome and blocks their interaction with the signal recognition particle (SRP), which normally targets nascent secretory peptides to the ER. BTF3 is also a general transcription factor that can form a stable complex with RNA polymerase II. Required for the initiation of transcription. This is Transcription factor BTF3 (BTF3) from Homo sapiens (Human).